The sequence spans 706 residues: Centrosomal protein kizuna (706 aa).

The stretch at 63–113 forms a coiled coil; sequence QRAKTRNLELLGNVENLASKLKEFSIDCSRLLQKRMEYKNHITRLKKDRRK. Basic residues predominate over residues 105 to 116; that stretch reads TRLKKDRRKMGS. 5 disordered regions span residues 105–184, 215–347, 571–603, 620–665, and 677–706; these read TRLK…LCMH, VREK…ASRG, EIKPARPSGTNAQTGEEQEIQSAEEDSADQSPV, SVAQ…KTKP, and ESDDSNSEIEMALRPQSCNTSSHDFDDFYD. Basic and acidic residues predominate over residues 118-127; it reads GKSEADEHPS. 2 stretches are compositionally biased toward polar residues: residues 128-156 and 164-180; these read RLSTQGLSQSAAIFMGHQTSNGSSRNDGA and HTEQIPNHPSLPPSQSG. The segment covering 215–251 has biased composition (basic and acidic residues); it reads VREKQMESDWDISQRAREQQRQEELKSPHTTLKEAEV. Low complexity predominate over residues 272 to 283; that stretch reads TRSPSPDTTDPS. Acidic residues predominate over residues 293-304; the sequence is GEDEEESAEDKD. Positions 308–320 are enriched in polar residues; it reads PINQNHSDYTSNI. Residues 586 to 598 are compositionally biased toward acidic residues; sequence EEQEIQSAEEDSA. Over residues 638-648 the composition is skewed to basic and acidic residues; that stretch reads PDAHKLEKPEV.

The protein belongs to the kizuna family.

Its subcellular location is the cytoplasm. The protein localises to the cytoskeleton. The protein resides in the microtubule organizing center. It localises to the centrosome. It is found in the cilium basal body. In terms of biological role, centrosomal protein required for establishing a robust mitotic centrosome architecture that can endure the forces that converge on the centrosomes during spindle formation. Required for stabilizing the expanded pericentriolar material around the centriole. The protein is Centrosomal protein kizuna (kiz) of Danio rerio (Zebrafish).